A 78-amino-acid polypeptide reads, in one-letter code: Acyl carrier protein (78 aa).

Residues 2 to 77 (STIEERVKKI…AAIDYINGHQ (76 aa)) enclose the Carrier domain. S37 is modified (O-(pantetheine 4'-phosphoryl)serine).

Belongs to the acyl carrier protein (ACP) family. Post-translationally, 4'-phosphopantetheine is transferred from CoA to a specific serine of apo-ACP by AcpS. This modification is essential for activity because fatty acids are bound in thioester linkage to the sulfhydryl of the prosthetic group.

Its subcellular location is the cytoplasm. The protein operates within lipid metabolism; fatty acid biosynthesis. Its function is as follows. Carrier of the growing fatty acid chain in fatty acid biosynthesis. The polypeptide is Acyl carrier protein (Shigella flexneri).